The chain runs to 955 residues: B3 domain-containing protein Os07g0563300 (955 aa).

2 stretches are compositionally biased toward pro residues: residues 1 to 20 (MSSP…PPPS) and 29 to 45 (VQPP…PQQP). Disordered stretches follow at residues 1 to 81 (MSSP…QRPR) and 325 to 392 (ARKG…SSSL). The span at 62–71 (QHQQQQQGPP) shows a compositional bias: low complexity. Polar residues predominate over residues 332 to 342 (DPCSSVSTTFK). Positions 343–355 (LDSHHPSILKDDP) are enriched in basic and acidic residues. The segment covering 382-392 (QQQQQMASSSL) has biased composition (low complexity). Positions 453–554 (FEKMLSASDA…KLVMGFRKAT (102 aa)) form a DNA-binding region, TF-B3. Polar residues-rich tracts occupy residues 556–565 (LSAEQDQPTK) and 598–608 (NTESKSSSPVE). The tract at residues 556 to 642 (LSAEQDQPTK…PLPVKRKATS (87 aa)) is disordered. The segment at 708 to 758 (SGENHQWAQCEDCSKWRKLPVDALLPSKWTCSDNKWDSERSSCDSAQEINM) adopts a CW-type zinc-finger fold. Residues C717, C720, C738, and C750 each contribute to the Zn(2+) site. Residues 856 to 955 (MMRREKRQQS…ATRLLRDNPT (100 aa)) form a disordered region. A compositionally biased stretch (basic and acidic residues) spans 862–877 (RQQSEKDSGVPRKREP). 2 stretches are compositionally biased toward polar residues: residues 878–900 (GQSS…SSPH) and 920–933 (TSSP…LNSQ). The span at 939-955 (EQSPKSDATRLLRDNPT) shows a compositional bias: basic and acidic residues.

Its subcellular location is the nucleus. The chain is B3 domain-containing protein Os07g0563300 from Oryza sativa subsp. japonica (Rice).